The primary structure comprises 410 residues: Transcription factor rglT (410 aa).

Residues Met1–Arg24 are disordered. Positions Cys28–Cys55 form a DNA-binding region, zn(2)-C6 fungal-type. The disordered stretch occupies residues His353–His372. A compositionally biased stretch (polar residues) spans Val358–Pro369.

The protein resides in the nucleus. Transcription factor that is involved in protection against oxidative stress. Binds to promoter regions of the gliotoxin (GT) biosynthetic genes gliZ, gliF, gliT, gliM, gliA and gtmA. Two related but different DNA motifs (5'-TCGG-3' and 5'-CGGNCGG-3') are specifically enriched among rglT binding sites in GT-inducing conditions. Also indirectly regulates the expression of gliP, gliG, gliH and gliN. Plays a key role in resistance against exogenously-added GT and GT biosynthesis, mainly through the direct regulation of gliT. Furthermore, rglT is important for virulence in chemotherapeutic mice with invasive pulmonary aspergillosis (IPA). In Aspergillus fumigatus (strain CBS 144.89 / FGSC A1163 / CEA10) (Neosartorya fumigata), this protein is Transcription factor rglT.